Consider the following 231-residue polypeptide: Elongation factor 1-delta 1 (231 aa).

Ala2 carries the N-acetylalanine modification. Residues 10-73 (DAGLKKLDEH…LRISGVSAEG (64 aa)) enclose the GST C-terminal domain. Disordered stretches follow at residues 85-108 (TEEA…EDDD) and 116-135 (ETEE…KAST). A compositionally biased stretch (basic and acidic residues) spans 119 to 129 (EEKKAAEERAA).

It belongs to the EF-1-beta/EF-1-delta family. As to quaternary structure, EF-1 is composed of 4 subunits: alpha, beta (1B-alpha=beta'), delta (1B-beta), and gamma (1B-gamma).

Its function is as follows. EF-1-beta and EF-1-delta stimulate the exchange of GDP bound to EF-1-alpha to GTP. The sequence is that of Elongation factor 1-delta 1 from Arabidopsis thaliana (Mouse-ear cress).